A 292-amino-acid polypeptide reads, in one-letter code: Recombination-promoting nuclease RpnA (292 aa).

It belongs to the Rpn/YhgA-like nuclease family. The cofactor is Mg(2+).

With respect to regulation, inhibited by EDTA, Zn(2+) and by Mg(2+) plus Mn(2+); stimulated by Ca(2+) in the presence of Mg(2+). In terms of biological role, a low activity DNA endonuclease yielding 3'-hydroxyl ends, equally active on ss or dsDNA, not active on dsRNA. Shows no sequence specificity. Upon expression enhances RecA-independent DNA recombination 49-fold, concomitantly reducing viability by 88% and probably inducing DNA damage as measured by induction of the SOS repair response in RecA cells. RecA-independent DNA recombination leads to replacement of recipient genes with large segments of donor DNA rather than DNA addition to the donor strain; increased expression of RpnA leads to smaller replacement segments, suggesting this protein may play a role in generating crossover events. This chain is Recombination-promoting nuclease RpnA, found in Escherichia coli (strain K12).